Reading from the N-terminus, the 254-residue chain is Very-long-chain (3R)-3-hydroxyacyl-CoA dehydratase 2 (254 aa).

Residue Ala-2 is modified to N-acetylalanine. Over 2–41 (AAVAATAAAKGNGGGGGRAGAGDASGTRKKKGPGPLATAY) the chain is Cytoplasmic. The disordered stretch occupies residues 11–33 (KGNGGGGGRAGAGDASGTRKKKG). Residues 12–21 (GNGGGGGRAG) show a composition bias toward gly residues. The helical transmembrane segment at 42–60 (LVIYNVVMTAGWLVIAVGL) threads the bilayer. At 61–79 (VRAYLAKGSYHSLYYSIEK) the chain is on the lumenal side. A helical transmembrane segment spans residues 80-97 (PLKFFQTGALLEILHCAI). Over 98–107 (GIVPSSVVLT) the chain is Cytoplasmic. Residues 108–125 (SFQVMSRVFLIWAVTHSV) form a helical membrane-spanning segment. Over 126–130 (KEVQS) the chain is Lumenal. Residues 131-146 (EDSVLLFVIAWTITEI) form a helical membrane-spanning segment. At 147–169 (IRYSFYTFSLLNHLPYLIKWARY) the chain is on the cytoplasmic side. A helical membrane pass occupies residues 170-187 (TLFIVLYPMGVSGELLTI). Residues Tyr-176 and Glu-183 contribute to the active site. Topologically, residues 188 to 217 (YAALPFVRQAGLYSISLPNKYNFSFDYYAF) are lumenal. The tract at residues 198 to 214 (GLYSISLPNKYNFSFDY) is may be involved in interaction with TECR. Residue Asn-209 is glycosylated (N-linked (GlcNAc...) asparagine). Residues 218–235 (LILIMISYIPIFPQLYFH) form a helical membrane-spanning segment. Over 236 to 254 (MIHQRRKILSHTEEHKKFE) the chain is Cytoplasmic.

Belongs to the very long-chain fatty acids dehydratase HACD family. May interact with enzymes of the ELO family (including ELOVL1); with those enzymes that mediate condensation, the first of the four steps of the reaction cycle responsible for fatty acids elongation, may be part of a larger fatty acids elongase complex. Interacts with BCAP31. Interacts (via the third lumenal loop) with TECR. Highly expressed in testis, spleen, prostate, colon and heart, followed by moderate expression in thymus, ovary, small intestine, peripheral blood leukocytes, liver, skeletal muscle and pancreas. Weakly detected in kidney, placenta, brain and lung.

Its subcellular location is the endoplasmic reticulum membrane. The catalysed reaction is a very-long-chain (3R)-3-hydroxyacyl-CoA = a very-long-chain (2E)-enoyl-CoA + H2O. It catalyses the reaction (3R)-hydroxyhexadecanoyl-CoA = (2E)-hexadecenoyl-CoA + H2O. It carries out the reaction (3R)-hydroxyoctadecanoyl-CoA = (2E)-octadecenoyl-CoA + H2O. The enzyme catalyses (3R)-hydroxyeicosanoyl-CoA = (2E)-eicosenoyl-CoA + H2O. The catalysed reaction is (3R)-hydroxydocosanoyl-CoA = (2E)-docosenoyl-CoA + H2O. It catalyses the reaction (3R)-hydroxytetracosanoyl-CoA = (2E)-tetracosenoyl-CoA + H2O. It carries out the reaction (3R)-hydroxyhexacosanoyl-CoA = (2E)-hexacosenoyl-CoA + H2O. Its pathway is lipid metabolism; fatty acid biosynthesis. In terms of biological role, catalyzes the third of the very long-chain fatty acids (VLCFA) elongation four-step cycle (condensation, reduction, dehydration, and reduction). This endoplasmic reticulum-elongation process is characterized by the addition of two carbons to the lipid chain through each cycle. This enzyme catalyzes the dehydration of the 3-hydroxyacyl-CoA intermediate into trans-2,3-enoyl-CoA, within each cycle of elongation. Therefore, it participates in the production of various VLCFAs involved in multiple biological processes as precursors of membrane lipids and lipid mediators. In Homo sapiens (Human), this protein is Very-long-chain (3R)-3-hydroxyacyl-CoA dehydratase 2.